We begin with the raw amino-acid sequence, 96 residues long: Acylphosphatase (96 aa).

One can recognise an Acylphosphatase-like domain in the interval 4 to 96 (RCEFLIFGKV…ESLNDFEILR (93 aa)). Catalysis depends on residues arginine 19 and asparagine 42.

Belongs to the acylphosphatase family.

The catalysed reaction is an acyl phosphate + H2O = a carboxylate + phosphate + H(+). In Helicobacter hepaticus (strain ATCC 51449 / 3B1), this protein is Acylphosphatase (acyP).